Consider the following 181-residue polypeptide: Alkyl hydroperoxide reductase AhpD (181 aa).

Catalysis depends on C131, which acts as the Proton donor. C131 and C134 form a disulfide bridge. The Cysteine sulfenic acid (-SOH) intermediate role is filled by C134.

It belongs to the AhpD family.

The enzyme catalyses N(6)-[(R)-dihydrolipoyl]-L-lysyl-[lipoyl-carrier protein] + a hydroperoxide = N(6)-[(R)-lipoyl]-L-lysyl-[lipoyl-carrier protein] + an alcohol + H2O. Functionally, antioxidant protein with alkyl hydroperoxidase activity. Required for the reduction of the AhpC active site cysteine residues and for the regeneration of the AhpC enzyme activity. The protein is Alkyl hydroperoxide reductase AhpD of Rhodopseudomonas palustris (strain BisA53).